We begin with the raw amino-acid sequence, 426 residues long: Serine--tRNA ligase (426 aa).

235–237 provides a ligand contact to L-serine; sequence TAE. 266-268 contacts ATP; the sequence is RRE. Glutamate 289 is an L-serine binding site. An ATP-binding site is contributed by 353-356; it reads EISS. Residue serine 389 participates in L-serine binding.

This sequence belongs to the class-II aminoacyl-tRNA synthetase family. Type-1 seryl-tRNA synthetase subfamily. In terms of assembly, homodimer. The tRNA molecule binds across the dimer.

Its subcellular location is the cytoplasm. The catalysed reaction is tRNA(Ser) + L-serine + ATP = L-seryl-tRNA(Ser) + AMP + diphosphate + H(+). It carries out the reaction tRNA(Sec) + L-serine + ATP = L-seryl-tRNA(Sec) + AMP + diphosphate + H(+). It functions in the pathway aminoacyl-tRNA biosynthesis; selenocysteinyl-tRNA(Sec) biosynthesis; L-seryl-tRNA(Sec) from L-serine and tRNA(Sec): step 1/1. Its function is as follows. Catalyzes the attachment of serine to tRNA(Ser). Is also able to aminoacylate tRNA(Sec) with serine, to form the misacylated tRNA L-seryl-tRNA(Sec), which will be further converted into selenocysteinyl-tRNA(Sec). This is Serine--tRNA ligase from Nostoc sp. (strain PCC 7120 / SAG 25.82 / UTEX 2576).